The chain runs to 159 residues: Cathelicidin-5 (159 aa).

A signal peptide spans 1 to 29 (METQRASLSLGRWSLWLLLLGLALPSASA). Gln30 carries the pyrrolidone carboxylic acid modification. A propeptide spanning residues 30–131 (QALSYREAVL…DITCAVPQSV (102 aa)) is cleaved from the precursor. Intrachain disulfides connect Cys86–Cys97 and Cys108–Cys125.

Belongs to the cathelicidin family.

The protein localises to the secreted. Exerts a potent antimicrobial activity against Gram-negative and Gram-positive bacteria, including methicillin-resistant Staphylococcus aureus, and fungi. This chain is Cathelicidin-5 (CATHL5), found in Bos taurus (Bovine).